The following is a 301-amino-acid chain: MPT51 antigen (301 aa).

The first 36 residues, M1 to A36, serve as a signal peptide directing secretion.

The protein belongs to the mycobacterial A85 antigen family. As to quaternary structure, homodimer.

It localises to the secreted. In terms of biological role, may have a role in host tissue attachment, whereby ligands may include the serum protein fibronectin and small sugars. The chain is MPT51 antigen (mpt51) from Mycobacterium leprae (strain TN).